Reading from the N-terminus, the 121-residue chain is Flagellar protein FliT (121 aa).

A required for homodimerization region spans residues 1–50; sequence MNHAPHLYFAWQQLVEKSQLMLRLATEEQWDELIASEMAYVNAVQEIAHL. The segment at 60–98 is fliD binding; that stretch reads MQEQLRPMLRLILDNESKVKQLLQIRMDELAKLVGQSSV.

It belongs to the FliT family. In terms of assembly, homodimer. Interacts with FliD and FlhC.

Its subcellular location is the cytoplasm. The protein resides in the cytosol. In terms of biological role, dual-function protein that regulates the transcription of class 2 flagellar operons and that also acts as an export chaperone for the filament-capping protein FliD. As a transcriptional regulator, acts as an anti-FlhDC factor; it directly binds FlhC, thus inhibiting the binding of the FlhC/FlhD complex to class 2 promoters, resulting in decreased expression of class 2 flagellar operons. As a chaperone, effects FliD transition to the membrane by preventing its premature polymerization, and by directing it to the export apparatus. This Escherichia coli (strain ATCC 8739 / DSM 1576 / NBRC 3972 / NCIMB 8545 / WDCM 00012 / Crooks) protein is Flagellar protein FliT.